The following is a 239-amino-acid chain: ATP synthase subunit a, chloroplastic (239 aa).

The next 5 membrane-spanning stretches (helical) occupy residues 30–50 (VLLV…LGTF), 87–107 (VPFI…GALV), 126–146 (INTT…AGLS), 191–211 (LVVA…VMVL), and 212–232 (GLFA…SYIG).

This sequence belongs to the ATPase A chain family. In terms of assembly, F-type ATPases have 2 components, CF(1) - the catalytic core - and CF(0) - the membrane proton channel. CF(1) has five subunits: alpha(3), beta(3), gamma(1), delta(1), epsilon(1). CF(0) has four main subunits: a, b, b' and c.

It is found in the plastid. The protein localises to the chloroplast thylakoid membrane. Functionally, key component of the proton channel; it plays a direct role in the translocation of protons across the membrane. The protein is ATP synthase subunit a, chloroplastic of Cyanidium caldarium (Red alga).